A 199-amino-acid polypeptide reads, in one-letter code: Probable thymidylate kinase (199 aa).

7–14 contacts ATP; the sequence is GLDGSGKT.

This sequence belongs to the thymidylate kinase family.

It carries out the reaction dTMP + ATP = dTDP + ADP. In Halobacterium salinarum (strain ATCC 29341 / DSM 671 / R1), this protein is Probable thymidylate kinase.